The primary structure comprises 289 residues: Glucosamine-6-phosphate deaminase 1 (289 aa).

N6-acetyllysine is present on Lys-64. Catalysis depends on Asp-72, which acts as the Proton acceptor; for enolization step. Asp-141 serves as the catalytic For ring-opening step. Catalysis depends on His-143, which acts as the Proton acceptor; for ring-opening step. Residue Glu-148 is the For ring-opening step of the active site. Phosphothreonine is present on Thr-161.

The protein belongs to the glucosamine/galactosamine-6-phosphate isomerase family. As to quaternary structure, homohexamer.

The protein localises to the cytoplasm. It catalyses the reaction alpha-D-glucosamine 6-phosphate + H2O = beta-D-fructose 6-phosphate + NH4(+). The protein operates within nucleotide-sugar biosynthesis; UDP-N-acetyl-alpha-D-glucosamine biosynthesis; alpha-D-glucosamine 6-phosphate from D-fructose 6-phosphate: step 1/1. With respect to regulation, allosterically activated by N-acetylglucosamine-6-phosphate (GlcNAc6P). In terms of biological role, catalyzes the reversible conversion of alpha-D-glucosamine 6-phosphate (GlcN-6P) into beta-D-fructose 6-phosphate (Fru-6P) and ammonium ion, a regulatory reaction step in de novo uridine diphosphate-N-acetyl-alpha-D-glucosamine (UDP-GlcNAc) biosynthesis via hexosamine pathway. Deamination is coupled to aldo-keto isomerization mediating the metabolic flux from UDP-GlcNAc toward Fru-6P. At high ammonium level can drive amination and isomerization of Fru-6P toward hexosamines and UDP-GlcNAc synthesis. Has a role in fine tuning the metabolic fluctuations of cytosolic UDP-GlcNAc and their effects on hyaluronan synthesis that occur during tissue remodeling. Seems to trigger calcium oscillations in mammalian eggs. These oscillations serve as the essential trigger for egg activation and early development of the embryo. This chain is Glucosamine-6-phosphate deaminase 1, found in Bos taurus (Bovine).